The sequence spans 560 residues: 2-succinyl-5-enolpyruvyl-6-hydroxy-3-cyclohexene-1-carboxylate synthase (560 aa).

It belongs to the TPP enzyme family. MenD subfamily. Homodimer. Mg(2+) serves as cofactor. It depends on Mn(2+) as a cofactor. The cofactor is thiamine diphosphate.

The catalysed reaction is isochorismate + 2-oxoglutarate + H(+) = 5-enolpyruvoyl-6-hydroxy-2-succinyl-cyclohex-3-ene-1-carboxylate + CO2. The protein operates within quinol/quinone metabolism; 1,4-dihydroxy-2-naphthoate biosynthesis; 1,4-dihydroxy-2-naphthoate from chorismate: step 2/7. It functions in the pathway quinol/quinone metabolism; menaquinone biosynthesis. In terms of biological role, catalyzes the thiamine diphosphate-dependent decarboxylation of 2-oxoglutarate and the subsequent addition of the resulting succinic semialdehyde-thiamine pyrophosphate anion to isochorismate to yield 2-succinyl-5-enolpyruvyl-6-hydroxy-3-cyclohexene-1-carboxylate (SEPHCHC). The protein is 2-succinyl-5-enolpyruvyl-6-hydroxy-3-cyclohexene-1-carboxylate synthase of Pectobacterium carotovorum subsp. carotovorum (strain PC1).